The sequence spans 1065 residues: Leucine-rich repeats and immunoglobulin-like domains protein 2 (1065 aa).

Residues 1–40 (MAPAPLGVPEEQLLGCRSRVLSRLLFIAQTALLLLPAAGA) form the signal peptide. The LRRNT domain maps to 41 to 75 (GLCPAPCSCRIPLLDCSRRKLPAPSWRALSGLLPP). Topologically, residues 41 to 807 (GLCPAPCSCR…HEDDGWTTVG (767 aa)) are extracellular. LRR repeat units lie at residues 76 to 97 (DTAILDFSHNRLSNWNISLESQ), 98 to 119 (TLQEVKMNYNELTEIPYFGEPT), 121 to 142 (NITLLSLVHNIIPEINAQALQF), 145 to 166 (ALESLDLSSNIISEIKTSSFPR), 168 to 189 (QLKYLNLSNNRITTLEAGCFDN), 193 to 214 (SLLVVKLNRNRMSMIPPKIFKL), 216 to 237 (HLQFLELKRNRIKIVEGLTFQG), 240 to 261 (SLRSLKMQRNGISKLKDGAFFG), 264 to 285 (NMEELELEHNNLTRVNKGWLYG), 288 to 309 (MLQQLYVSQNAIERISPDAWEF), 312 to 333 (RLSELDLSYNQLTRLDESAFVG), 336 to 357 (LLERLNLGDNRVTHIADGVFRF), 360 to 382 (NLQTLDLRNNEISWAIEDASEAF), 387 to 408 (SLTKLILQGNQIKSITKKAFIG), and 411 to 432 (SLEHLDLNNNAIMSIQENAFSQ). Residue Asn91 is glycosylated (N-linked (GlcNAc...) asparagine). An N-linked (GlcNAc...) asparagine glycan is attached at Asn121. 2 N-linked (GlcNAc...) asparagine glycosylation sites follow: Asn173 and Asn189. Residue Asn274 is glycosylated (N-linked (GlcNAc...) asparagine). 5 N-linked (GlcNAc...) asparagine glycosylation sites follow: Asn441, Asn468, Asn514, Asn571, and Asn589. An LRRCT domain is found at 443 to 494 (SSLLCDCHLKWLLQWLVDNNFQHSVNVSCAHPEWLAGQSILNVDLKDFVCDD). Ig-like C2-type domains follow at residues 498–597 (PQIR…AKLT), 602–691 (PSFL…ASLT), and 696–785 (PSFI…NVIS). Cys519 and Cys580 are oxidised to a cystine. Cys623 and Cys675 are disulfide-bonded. 2 N-linked (GlcNAc...) asparagine glycosylation sites follow: Asn687 and Asn728. Cys717 and Cys766 are oxidised to a cystine. The helical transmembrane segment at 808–828 (IVIIVVVCCVVGTSLIWVIVI) threads the bilayer. The Cytoplasmic segment spans residues 829–1065 (YHMRRKNEDY…RNIQDGSEGT (237 aa)). Tyr906 is subject to Phosphotyrosine. 2 disordered regions span residues 963–990 (SANREPSAFPTNHERISEKKLPSTQMSG) and 1003–1040 (ELGLPHPPFSQQPVHESPQLHQNEGLAGREPDCSASSM). The span at 974–983 (NHERISEKKL) shows a compositional bias: basic and acidic residues. Over residues 1013-1024 (QQPVHESPQLHQ) the composition is skewed to polar residues.

In terms of tissue distribution, detected in all tissues analyzed.

It localises to the cell membrane. The protein resides in the cytoplasm. In Homo sapiens (Human), this protein is Leucine-rich repeats and immunoglobulin-like domains protein 2 (LRIG2).